Here is a 134-residue protein sequence, read N- to C-terminus: Small ribosomal subunit protein uS8c (134 aa).

It belongs to the universal ribosomal protein uS8 family. Part of the 30S ribosomal subunit.

The protein resides in the plastid. It is found in the chloroplast. Its function is as follows. One of the primary rRNA binding proteins, it binds directly to 16S rRNA central domain where it helps coordinate assembly of the platform of the 30S subunit. The sequence is that of Small ribosomal subunit protein uS8c (rps8) from Draba nemorosa (Woodland whitlowgrass).